Consider the following 308-residue polypeptide: Mitochondrial import receptor subunit TOM40B (308 aa).

The segment at 1-29 (MGNTLGLAPMGTLPRRSHRREEPLPNPGS) is disordered. A required for mitochondrial targeting region spans residues 281 to 308 (PLPVTLALGAFLNHWRNRFHCGFSITVG).

This sequence belongs to the Tom40 family. In terms of assembly, forms part of the preprotein translocase of the outer mitochondrial membrane (TOM complex) containing TOMM22, TOMM40, TOMM40L and TOMM70. Interacts with mitochondrial targeting sequences.

It localises to the mitochondrion outer membrane. Its function is as follows. Potential channel-forming protein implicated in import of protein precursors into mitochondria. The chain is Mitochondrial import receptor subunit TOM40B (Tomm40l) from Mus musculus (Mouse).